A 194-amino-acid polypeptide reads, in one-letter code: Fibroblast growth factor 7 (194 aa).

Positions 1 to 31 are cleaved as a signal peptide; the sequence is MRKWILTWILPSLLYRSCFHIICLVGTISLA. The N-linked (GlcNAc...) asparagine glycan is linked to N45.

The protein belongs to the heparin-binding growth factors family. Interacts with FGFBP1. Interacts with FGFR2. Affinity between fibroblast growth factors (FGFs) and their receptors is increased by heparan sulfate glycosaminoglycans that function as coreceptors.

In terms of biological role, plays an important role in the regulation of embryonic development, cell proliferation and cell differentiation. Required for normal branching morphogenesis. Growth factor active on keratinocytes. Possible major paracrine effector of normal epithelial cell proliferation. This Ovis aries (Sheep) protein is Fibroblast growth factor 7 (FGF7).